We begin with the raw amino-acid sequence, 293 residues long: Small ribosomal subunit biogenesis GTPase RsgA 2 (293 aa).

In terms of domain architecture, CP-type G spans 63-223 (SNELVRPPIA…VADTPGFSVL (161 aa)). Residues 112–115 (TKVD) and 166–174 (GQSGVGKSS) each bind GTP. Residues Cys247, Cys252, His254, and Cys260 each coordinate Zn(2+).

This sequence belongs to the TRAFAC class YlqF/YawG GTPase family. RsgA subfamily. In terms of assembly, monomer. Associates with 30S ribosomal subunit, binds 16S rRNA. Zn(2+) is required as a cofactor.

The protein localises to the cytoplasm. Functionally, one of several proteins that assist in the late maturation steps of the functional core of the 30S ribosomal subunit. Helps release RbfA from mature subunits. May play a role in the assembly of ribosomal proteins into the subunit. Circularly permuted GTPase that catalyzes slow GTP hydrolysis, GTPase activity is stimulated by the 30S ribosomal subunit. In Oceanobacillus iheyensis (strain DSM 14371 / CIP 107618 / JCM 11309 / KCTC 3954 / HTE831), this protein is Small ribosomal subunit biogenesis GTPase RsgA 2.